The primary structure comprises 239 residues: Leucine-rich repeat-containing protein 57 (239 aa).

G2 is lipidated: N-myristoyl glycine. LRR repeat units lie at residues 39 to 60 (NLRT…IIGK), 63 to 85 (LLKS…CNLK), 86 to 107 (KLET…FGQL), 109 to 130 (ALKT…LCCL), 132 to 153 (HLDV…VGEL), 154 to 175 (QAIE…ISCC), 177 to 197 (RLKV…PQSI), and 202 to 222 (QICL…RELE).

Its subcellular location is the membrane. In Mus musculus (Mouse), this protein is Leucine-rich repeat-containing protein 57 (Lrrc57).